The primary structure comprises 90 residues: Small regulatory polypeptide of amino acid response (90 aa).

The Lumenal segment spans residues 1 to 18; that stretch reads MGAKAPRGPKVAQWAMET. A helical transmembrane segment spans residues 19-39; the sequence is AVIGVVVVLFVVTVAITCVLC. Topologically, residues 40–90 are cytoplasmic; sequence CFSCDSRAQDPQGGPGRSFTVATFRQEASLFTGPVRHAQPVPSAQDFWTFM.

Interacts with components of the lysosomal V-ATPase complex. Interacts with ATP6V0A1. Interacts with ATP6V0A2. Highly expressed in lung, heart and skeletal muscle.

The protein resides in the late endosome membrane. The protein localises to the lysosome membrane. In terms of biological role, negative regulator of amino acid sensing and mTORC1, a signaling complex promoting cell growth in response to growth factors, energy levels and amino acids. Negatively regulates mTORC1 activation by inhibiting recruitment of mTORC1 to lysosomes upon stimulation with amino acids: acts by promoting the formation of a tightly bound supercomplex composed of the lysosomal V-ATPase, Ragulator and Rag GTPases, preventing recruitment of mTORC1. Acts as a regulator of muscle regeneration following injury by regulating mTORC1 activation. The chain is Small regulatory polypeptide of amino acid response from Homo sapiens (Human).